The following is a 487-amino-acid chain: N-succinylglutamate 5-semialdehyde dehydrogenase (487 aa).

221–226 contributes to the NAD(+) binding site; the sequence is GSSRTG. Catalysis depends on residues Glu-244 and Cys-278.

It belongs to the aldehyde dehydrogenase family. AstD subfamily.

It catalyses the reaction N-succinyl-L-glutamate 5-semialdehyde + NAD(+) + H2O = N-succinyl-L-glutamate + NADH + 2 H(+). It functions in the pathway amino-acid degradation; L-arginine degradation via AST pathway; L-glutamate and succinate from L-arginine: step 4/5. Its function is as follows. Catalyzes the NAD-dependent reduction of succinylglutamate semialdehyde into succinylglutamate. This is N-succinylglutamate 5-semialdehyde dehydrogenase from Ectopseudomonas mendocina (strain ymp) (Pseudomonas mendocina).